The sequence spans 507 residues: AMP phosphorylase (507 aa).

AMP is bound by residues Gly-168, Ser-194 to Gly-199, and Thr-203. Asp-256 serves as the catalytic Proton donor. AMP is bound by residues Ser-264 and Lys-288.

The protein belongs to the thymidine/pyrimidine-nucleoside phosphorylase family. Type 2 subfamily.

The catalysed reaction is AMP + phosphate = alpha-D-ribose 1,5-bisphosphate + adenine. It catalyses the reaction CMP + phosphate = cytosine + alpha-D-ribose 1,5-bisphosphate. The enzyme catalyses UMP + phosphate = alpha-D-ribose 1,5-bisphosphate + uracil. In terms of biological role, catalyzes the conversion of AMP and phosphate to adenine and ribose 1,5-bisphosphate (R15P). Exhibits phosphorylase activity toward CMP and UMP in addition to AMP. Functions in an archaeal AMP degradation pathway, together with R15P isomerase and RubisCO. This chain is AMP phosphorylase, found in Methanosarcina mazei (strain ATCC BAA-159 / DSM 3647 / Goe1 / Go1 / JCM 11833 / OCM 88) (Methanosarcina frisia).